Consider the following 250-residue polypeptide: Ubiquinone/menaquinone biosynthesis C-methyltransferase UbiE (250 aa).

Residues Thr73, Asp94, 122-123 (NS), and Ser139 contribute to the S-adenosyl-L-methionine site.

Belongs to the class I-like SAM-binding methyltransferase superfamily. MenG/UbiE family.

It carries out the reaction a 2-demethylmenaquinol + S-adenosyl-L-methionine = a menaquinol + S-adenosyl-L-homocysteine + H(+). The enzyme catalyses a 2-methoxy-6-(all-trans-polyprenyl)benzene-1,4-diol + S-adenosyl-L-methionine = a 5-methoxy-2-methyl-3-(all-trans-polyprenyl)benzene-1,4-diol + S-adenosyl-L-homocysteine + H(+). Its pathway is quinol/quinone metabolism; menaquinone biosynthesis; menaquinol from 1,4-dihydroxy-2-naphthoate: step 2/2. It functions in the pathway cofactor biosynthesis; ubiquinone biosynthesis. Functionally, methyltransferase required for the conversion of demethylmenaquinol (DMKH2) to menaquinol (MKH2) and the conversion of 2-polyprenyl-6-methoxy-1,4-benzoquinol (DDMQH2) to 2-polyprenyl-3-methyl-6-methoxy-1,4-benzoquinol (DMQH2). This chain is Ubiquinone/menaquinone biosynthesis C-methyltransferase UbiE, found in Wigglesworthia glossinidia brevipalpis.